The following is an 88-amino-acid chain: MALKERIGTVVSDKMDKTVVVAVINRYPHPTYKKIVSKTTRYKAHDPENSCVLGDRVKIKETRPLSAHKRWAIEEILNKTIMSKEDKK.

It belongs to the universal ribosomal protein uS17 family. Part of the 30S ribosomal subunit.

In terms of biological role, one of the primary rRNA binding proteins, it binds specifically to the 5'-end of 16S ribosomal RNA. This Prochlorococcus marinus subsp. pastoris (strain CCMP1986 / NIES-2087 / MED4) protein is Small ribosomal subunit protein uS17.